The following is a 206-amino-acid chain: Halorhodopsin (206 aa).

A helical transmembrane segment spans residues 1–15 (IALAGLSILLFVYMG). The Cytoplasmic segment spans residues 16 to 21 (RNVEDP). Residues 22 to 45 (RAQLIFVATLMVPLVSISSYTGLV) traverse the membrane as a helical segment. Residues 46–75 (SGLTVGFLEMPAGHALAGMGAGPEGGVFTP) are Extracellular-facing. Residues 76 to 97 (WGRYLTWAFSTPMILIALGLLA) traverse the membrane as a helical segment. Residues 98-100 (GSN) are Cytoplasmic-facing. The helical transmembrane segment at 101 to 124 (MSKLFTAVVADVGMCITGLAAALT) threads the bilayer. Over 125–127 (TSS) the chain is Extracellular. A helical transmembrane segment spans residues 128 to 150 (YLLRWVWYGISCAFFVVVLYILL). Topologically, residues 151 to 162 (AEWAKDAEVAGT) are cytoplasmic. The helical transmembrane segment at 163–186 (ADIFNTLKVLTVVLWLGYPIFWAL) threads the bilayer. The Extracellular portion of the chain corresponds to 187 to 195 (GAEGLAVLD). The chain crosses the membrane as a helical span at residues 196 to 206 (IAITSWAYSGM).

It belongs to the archaeal/bacterial/fungal opsin family.

The protein localises to the cell membrane. In terms of biological role, light-driven chloride pump. The protein is Halorhodopsin (hop) of Halobacterium halobium (strain mex).